A 549-amino-acid chain; its full sequence is Probable protein kinase UbiB (549 aa).

In terms of domain architecture, Protein kinase spans D123–L501. ATP contacts are provided by residues L129 to V137 and K152. D287 (proton acceptor) is an active-site residue. The next 2 membrane-spanning stretches (helical) occupy residues H496–I516 and A520–W540.

This sequence belongs to the ABC1 family. UbiB subfamily.

It is found in the cell inner membrane. It functions in the pathway cofactor biosynthesis; ubiquinone biosynthesis [regulation]. Its function is as follows. Is probably a protein kinase regulator of UbiI activity which is involved in aerobic coenzyme Q (ubiquinone) biosynthesis. This chain is Probable protein kinase UbiB, found in Shewanella baltica (strain OS223).